A 505-amino-acid chain; its full sequence is ATP synthase subunit alpha (505 aa).

171-178 contacts ATP; the sequence is GDRQTGKT.

This sequence belongs to the ATPase alpha/beta chains family. In terms of assembly, F-type ATPases have 2 components, CF(1) - the catalytic core - and CF(0) - the membrane proton channel. CF(1) has five subunits: alpha(3), beta(3), gamma(1), delta(1), epsilon(1). CF(0) has three main subunits: a(1), b(2) and c(9-12). The alpha and beta chains form an alternating ring which encloses part of the gamma chain. CF(1) is attached to CF(0) by a central stalk formed by the gamma and epsilon chains, while a peripheral stalk is formed by the delta and b chains.

The protein localises to the cell inner membrane. It catalyses the reaction ATP + H2O + 4 H(+)(in) = ADP + phosphate + 5 H(+)(out). In terms of biological role, produces ATP from ADP in the presence of a proton gradient across the membrane. The alpha chain is a regulatory subunit. The polypeptide is ATP synthase subunit alpha (Campylobacter hominis (strain ATCC BAA-381 / DSM 21671 / CCUG 45161 / LMG 19568 / NCTC 13146 / CH001A)).